The primary structure comprises 259 residues: Probable ABC transporter permease protein RBE_1340 (259 aa).

Transmembrane regions (helical) follow at residues 25-45 (IFSL…SLII), 49-69 (LFIG…SGAV), 148-168 (VIAA…IGVM), 195-215 (PIDV…ISII), and 237-257 (AVVN…ELFF).

Belongs to the MlaE permease family.

It localises to the cell inner membrane. In terms of biological role, could be part of an ABC transporter complex. This is Probable ABC transporter permease protein RBE_1340 from Rickettsia bellii (strain RML369-C).